The chain runs to 430 residues: Adenylosuccinate synthetase (430 aa).

Residues 13–19 and 41–43 each bind GTP; these read GDEGKGK and GHT. Residue D14 is the Proton acceptor of the active site. Residues D14 and G41 each coordinate Mg(2+). IMP-binding positions include 14-17, 39-42, T130, R144, Q225, T240, and R304; these read DEGK and NAGH. Catalysis depends on H42, which acts as the Proton donor. A substrate-binding site is contributed by 300–306; sequence ASTGRPR. Residues R306, 332 to 334, and 414 to 416 contribute to the GTP site; these read KLD and STG.

This sequence belongs to the adenylosuccinate synthetase family. In terms of assembly, homodimer. Mg(2+) serves as cofactor.

It localises to the cytoplasm. It catalyses the reaction IMP + L-aspartate + GTP = N(6)-(1,2-dicarboxyethyl)-AMP + GDP + phosphate + 2 H(+). It participates in purine metabolism; AMP biosynthesis via de novo pathway; AMP from IMP: step 1/2. In terms of biological role, plays an important role in the de novo pathway of purine nucleotide biosynthesis. Catalyzes the first committed step in the biosynthesis of AMP from IMP. The chain is Adenylosuccinate synthetase from Xanthomonas axonopodis pv. citri (strain 306).